We begin with the raw amino-acid sequence, 353 residues long: Protein U67 (353 aa).

Belongs to the herpesviridae UL95 family.

This is Protein U67 (U67) from Homo sapiens (Human).